The following is a 155-amino-acid chain: Protein FAM163B (155 aa).

The helical transmembrane segment at 6-26 threads the bilayer; that stretch reads VVITGGILATVILLCIIAVLC.

Belongs to the FAM163 family.

The protein localises to the membrane. This Xenopus tropicalis (Western clawed frog) protein is Protein FAM163B (fam163b).